The primary structure comprises 629 residues: Protein SPT2 homolog (629 aa).

The segment at 1–522 (MDFDSVLSIA…SGHRILVKPS (522 aa)) is important for interaction with DNA. Positions 45–72 (QAFLKKKAVEQKNKEQQDKKAKEDLLAK) form a coiled coil. A compositionally biased stretch (basic and acidic residues) spans 53-93 (VEQKNKEQQDKKAKEDLLAKRVELKSDRKARAMASRTKDNF). Disordered regions lie at residues 53 to 181 (VEQK…ASSS), 206 to 533 (KTEE…TSSY), and 608 to 629 (EDEE…KKRK). Residues 111 to 123 (KGSSTEEQQSSTK) show a composition bias toward polar residues. Acidic residues predominate over residues 127-144 (GDYDDEDNFDYEGTDSES). Residues 203-228 (VVKKTEERLRTAEEIRELEMERRVKK) adopt a coiled-coil conformation. 2 stretches are compositionally biased toward basic and acidic residues: residues 206–247 (KTEE…KDSR) and 257–277 (KHVD…EKHQ). 7 stretches are compositionally biased toward polar residues: residues 278-297 (SSST…TPTS), 305-327 (SNSG…SFQA), 335-345 (SQGQRPATPSD), 353-364 (VSLTQAKSSISG), 387-398 (SNFSTSGPSQKP), 437-450 (NLQS…SRAS), and 462-490 (SGSQ…TKNI). The interval 523-629 (GPALPPITSS…MQRKNAKKRK (107 aa)) is important for interaction with histones. Residues 591-629 (WKEQQKEEARSLRMAVLEDEEEERRELEEMQRKNAKKRK) are a coiled coil.

The protein belongs to the SPT2 family. Interacts with histones. Interacts with a heterotetrameric complex formed by histone H3 and H4, especially when the histone tetramer is not bound to DNA.

The protein localises to the nucleus. The protein resides in the nucleolus. Functionally, histone chaperone that stabilizes pre-existing histone tetramers and regulates replication-independent histone exchange on chromatin. Required for normal chromatin refolding in the coding region of transcribed genes, and for the suppression of spurious transcription. Binds DNA and histones and promotes nucleosome assembly (in vitro). Facilitates formation of tetrameric histone complexes containing histone H3 and H4. Modulates RNA polymerase 1-mediated transcription. Binds DNA, with a preference for branched DNA species, such as Y-form DNA and Holliday junction DNA. This chain is Protein SPT2 homolog (spty2d1), found in Danio rerio (Zebrafish).